The following is a 123-amino-acid chain: Small ribosomal subunit protein uS12cz/uS12cy (123 aa).

This sequence belongs to the universal ribosomal protein uS12 family. In terms of assembly, part of the 30S ribosomal subunit.

Its subcellular location is the plastid. It localises to the chloroplast. In terms of biological role, with S4 and S5 plays an important role in translational accuracy. Located at the interface of the 30S and 50S subunits. The sequence is that of Small ribosomal subunit protein uS12cz/uS12cy (rps12-A) from Gossypium barbadense (Sea Island cotton).